Consider the following 210-residue polypeptide: DNA dC-&gt;dU-editing enzyme APOBEC-3H (210 aa).

Residues 4–126 (LTAKTFSLQF…PNYQEGLLLL (123 aa)) enclose the CMP/dCMP-type deaminase domain. His-54 contributes to the Zn(2+) binding site. Catalysis depends on Glu-56, which acts as the Proton donor. Residues Cys-85 and Cys-88 each coordinate Zn(2+). The interval 182 to 210 (SRSVDVLENGLRSLQLGPVTPSSSIRNSR) is necessary and sufficient for localization to the cytoplasm.

This sequence belongs to the cytidine and deoxycytidylate deaminase family. Homodimer. Requires Zn(2+) as cofactor.

It localises to the cytoplasm. It carries out the reaction a 2'-deoxycytidine in single-stranded DNA + H2O + H(+) = a 2'-deoxyuridine in single-stranded DNA + NH4(+). Its activity is regulated as follows. Antiviral activity is neutralized by the simian immunodeficiency virus rhesus (SIV-mac) virion infectivity factor (VIF). Functionally, DNA deaminase (cytidine deaminase) which acts as an inhibitor of retrovirus replication and retrotransposon mobility via deaminase-dependent and -independent mechanisms. Exhibits antiviral activity against vif-deficient HIV-1. After the penetration of retroviral nucleocapsids into target cells of infection and the initiation of reverse transcription, it can induce the conversion of cytosine to uracil in the minus-sense single-strand viral DNA, leading to G-to-A hypermutations in the subsequent plus-strand viral DNA. The resultant detrimental levels of mutations in the proviral genome, along with a deamination-independent mechanism that works prior to the proviral integration, together exert efficient antiretroviral effects in infected target cells. Selectively targets single-stranded DNA and does not deaminate double-stranded DNA or single- or double-stranded RNA. The chain is DNA dC-&gt;dU-editing enzyme APOBEC-3H from Macaca mulatta (Rhesus macaque).